The following is a 106-amino-acid chain: N(2)-fixation sustaining protein CowN (106 aa).

The protein belongs to the CowN family.

Functionally, is required to sustain N(2)-dependent growth in the presence of low levels of carbon monoxide (CO). Probably acts by protecting the N(2) fixation ability of the nitrogenase complex, which is inactivated in the presence of CO. The sequence is that of N(2)-fixation sustaining protein CowN from Denitrovibrio acetiphilus (strain DSM 12809 / NBRC 114555 / N2460).